The sequence spans 302 residues: Glycine--tRNA ligase alpha subunit (302 aa).

Belongs to the class-II aminoacyl-tRNA synthetase family. As to quaternary structure, tetramer of two alpha and two beta subunits.

The protein localises to the cytoplasm. It carries out the reaction tRNA(Gly) + glycine + ATP = glycyl-tRNA(Gly) + AMP + diphosphate. The protein is Glycine--tRNA ligase alpha subunit of Xanthomonas axonopodis pv. citri (strain 306).